The chain runs to 231 residues: Large ribosomal subunit protein uL1 (231 aa).

The protein belongs to the universal ribosomal protein uL1 family. In terms of assembly, part of the 50S ribosomal subunit.

Binds directly to 23S rRNA. The L1 stalk is quite mobile in the ribosome, and is involved in E site tRNA release. Functionally, protein L1 is also a translational repressor protein, it controls the translation of the L11 operon by binding to its mRNA. This chain is Large ribosomal subunit protein uL1, found in Methylococcus capsulatus (strain ATCC 33009 / NCIMB 11132 / Bath).